The sequence spans 1259 residues: uncharacterized protein (1259 aa).

Positions 354 to 410 are disordered; that stretch reads KLNQAGGKRNSSMNNSTQNNNSSRSNNSARNNNSVWNNNNSAWKNNNSAWNDNSSWK. Residues 362 to 410 are compositionally biased toward low complexity; it reads RNSSMNNSTQNNNSSRSNNSARNNNSVWNNNNSAWKNNNSAWNDNSSWK.

Its subcellular location is the virion. This is an uncharacterized protein from Acanthamoeba polyphaga (Amoeba).